Here is a 257-residue protein sequence, read N- to C-terminus: Gasdermin-like protein rcd-1-1 (257 aa).

The protein belongs to the gasdermin family. As to quaternary structure, heterooligomer; the heterooligomer with rcd-1-2 forms a ring-shaped pore complex when inserted in the membrane.

It is found in the cytoplasm. Its subcellular location is the cell membrane. Its function is as follows. Gasdermin-like protein involved in heterokaryon incompatibility, a process that ensures that during spontaneous vegetative cell fusion, only compatible cells from the same colony survive (non-self-recognition). In N.crassa, the rcd-1 locus exists as 2 incompatible alleles, rcd-1-1 (this entry) and rcd-1-2 (AC P0DW10). During the allorecognition process, forms a heterooligomer with rcd-1-2, thereby forming a functional gasdermin-like complex that binds to membranes and forms pores, triggering cell death. Binds negatively charged phospholipids, such as cardiolipin and phosphatidylserine. Also binds to phosphoinositides, preferentially to phosphatidylinositol-3-phosphate (PtdIns-3-P), PtdIns-5-P and PtdIns-3,5-P2. The polypeptide is Gasdermin-like protein rcd-1-1 (Neurospora crassa (strain ATCC 24698 / 74-OR23-1A / CBS 708.71 / DSM 1257 / FGSC 987)).